Reading from the N-terminus, the 342-residue chain is MQEPSEDQATSDELSFVHDAVLLQEAVAAVLGVKALPKQTDDESQNSLQASGIYVDATFGRGGHSRLLLSQLADDATLIVFDKDPTAISVARELANSDSRVKVVHDSFATLTDSLAAMRITQVDGLMADLGISSPQIDDGSRGFSFMRDGAVDMRMDTSRGQSVAEWLETVDDETLANVLYEFGEERHSRRIARAIKQMDSYDSTLALAEVIKVAHPNWQRGKHPATQSFQAMRIFINNELGDVDNFLEQSIPILKVGGQLAVISFHSLEDRRIKQFLQRHSKGQYPEDENLPMPPKRPRYFSKPKRVGPSKAEISHNPRSRSAWLRMATRTDADYVADIHP.

S-adenosyl-L-methionine is bound by residues 62–64 (GGH), D82, F108, D129, and Q136. The interval 280–319 (RHSKGQYPEDENLPMPPKRPRYFSKPKRVGPSKAEISHNP) is disordered. Positions 297 to 309 (KRPRYFSKPKRVG) are enriched in basic residues.

It belongs to the methyltransferase superfamily. RsmH family.

Its subcellular location is the cytoplasm. The enzyme catalyses cytidine(1402) in 16S rRNA + S-adenosyl-L-methionine = N(4)-methylcytidine(1402) in 16S rRNA + S-adenosyl-L-homocysteine + H(+). Functionally, specifically methylates the N4 position of cytidine in position 1402 (C1402) of 16S rRNA. This is Ribosomal RNA small subunit methyltransferase H from Psychrobacter cryohalolentis (strain ATCC BAA-1226 / DSM 17306 / VKM B-2378 / K5).